A 501-amino-acid chain; its full sequence is Aspartyl/glutamyl-tRNA(Asn/Gln) amidotransferase subunit B (501 aa).

This sequence belongs to the GatB/GatE family. GatB subfamily. As to quaternary structure, heterotrimer of A, B and C subunits.

It catalyses the reaction L-glutamyl-tRNA(Gln) + L-glutamine + ATP + H2O = L-glutaminyl-tRNA(Gln) + L-glutamate + ADP + phosphate + H(+). The enzyme catalyses L-aspartyl-tRNA(Asn) + L-glutamine + ATP + H2O = L-asparaginyl-tRNA(Asn) + L-glutamate + ADP + phosphate + 2 H(+). Functionally, allows the formation of correctly charged Asn-tRNA(Asn) or Gln-tRNA(Gln) through the transamidation of misacylated Asp-tRNA(Asn) or Glu-tRNA(Gln) in organisms which lack either or both of asparaginyl-tRNA or glutaminyl-tRNA synthetases. The reaction takes place in the presence of glutamine and ATP through an activated phospho-Asp-tRNA(Asn) or phospho-Glu-tRNA(Gln). The polypeptide is Aspartyl/glutamyl-tRNA(Asn/Gln) amidotransferase subunit B (Mycobacterium sp. (strain KMS)).